The chain runs to 876 residues: SED5-binding protein 2 (876 aa).

Ser-51 carries the phosphoserine modification. Positions 164 to 189 are zinc finger-like; that stretch reads CRRCRSYMNPFVVFINQGRKWQCNIC. Acidic residues predominate over residues 300 to 324; sequence VSDEDDEESDGEEEDEDEEEEDVDN. The tract at residues 300-326 is disordered; it reads VSDEDDEESDGEEEDEDEEEEDVDNSE.

The protein belongs to the SEC23/SEC24 family. SEC24 subfamily. In terms of assembly, COPII is composed of at least five proteins: the SEC23/24 complex, the SEC13/31 complex and SAR1. Interacts with GRH1.

Its subcellular location is the cytoplasm. It is found in the golgi apparatus membrane. It localises to the endoplasmic reticulum membrane. Functionally, component of the COPII coat, that covers ER-derived vesicles involved in transport from the endoplasmic reticulum to the Golgi apparatus. COPII acts in the cytoplasm to promote the transport of secretory, plasma membrane, and vacuolar proteins from the endoplasmic reticulum to the Golgi complex. This chain is SED5-binding protein 2 (SFB2), found in Saccharomyces cerevisiae (strain ATCC 204508 / S288c) (Baker's yeast).